The chain runs to 260 residues: MSIRIKIDKLRQIVAYFSEFSEEVSINVDSTDELMYIFAALGGSVNIWAIIPLSASVFYRGAENIVFNLPVSKVKSCLCSFHNDAIIDIEPDLENNLVKLSSYHVVSVDCNKELMPIRTDTTICLSIDQKKSYVFNFHKYEEKCCGRTVIHLEWLLGFIKCISQHQHLAIMFKDDNIIMKTPGNTDAFSREYSMTECSQELQKFSFKIAISSLNKLRGFKKRVNVFETRIVMDNDDNILGMLFSDRVQSFKINIFMAFLD.

The protein belongs to the chordopoxvirinae VLTF-1 family. Interacts with the late transcription factors VLTF-2 and VLTF-3. Interacts with the late transcription elongation factor VLTF-4. Interacts with itself.

In terms of biological role, associates with RNA polymerase to initiate transcription from late gene promoters. This chain is Late transcription factor 1 (OPG093), found in Homo sapiens (Human).